A 376-amino-acid chain; its full sequence is Putative glutamate--cysteine ligase 2-1 (376 aa).

It belongs to the glutamate--cysteine ligase type 2 family. YbdK subfamily.

The catalysed reaction is L-cysteine + L-glutamate + ATP = gamma-L-glutamyl-L-cysteine + ADP + phosphate + H(+). Its function is as follows. ATP-dependent carboxylate-amine ligase which exhibits weak glutamate--cysteine ligase activity. This chain is Putative glutamate--cysteine ligase 2-1, found in Mycobacterium sp. (strain JLS).